We begin with the raw amino-acid sequence, 67 residues long: Small, acid-soluble spore protein 2 (67 aa).

It belongs to the alpha/beta-type SASP family.

SASP are bound to spore DNA. They are double-stranded DNA-binding proteins that cause DNA to change to an a-like conformation. They protect the DNA backbone from chemical and enzymatic cleavage and are thus involved in dormant spore's high resistance to UV light. This Sporosarcina ureae protein is Small, acid-soluble spore protein 2 (Su-2).